A 30-amino-acid chain; its full sequence is Cysteine-rich venom protein annuliferin-a (30 aa).

The protein belongs to the CRISP family. In terms of processing, contains 8 disulfide bonds. Expressed by the venom gland.

It is found in the secreted. Inhibits calcium-activated potassium channels (KCa), voltage-gated potassium channel (Kv), and the calcium release channel/ryanodine receptor (RyR). The sequence is that of Cysteine-rich venom protein annuliferin-a from Naja annulifera (Banded Egyptian cobra).